The following is a 399-amino-acid chain: Probable peptidoglycan glycosyltransferase FtsW (399 aa).

Residues methionine 1 to proline 25 are Cytoplasmic-facing. A helical transmembrane segment spans residues leucine 26 to methionine 46. Residues serine 47–alanine 64 lie on the Periplasmic side of the membrane. A helical transmembrane segment spans residues isoleucine 65–tryptophan 85. Over glutamate 86–histidine 88 the chain is Cytoplasmic. A helical membrane pass occupies residues glycine 89 to glycine 109. Residues arginine 110–arginine 117 lie on the Periplasmic side of the membrane. The helical transmembrane segment at tryptophan 118–leucine 138 threads the bilayer. Residues tyrosine 139–asparagine 153 are Cytoplasmic-facing. Residues glutamine 154 to methionine 174 traverse the membrane as a helical segment. The Periplasmic segment spans residues glutamine 175–aspartate 177. Transmembrane regions (helical) follow at residues phenylalanine 178–serine 198 and leucine 199–phenylalanine 219. Residues serine 220–serine 281 lie on the Periplasmic side of the membrane. A helical membrane pass occupies residues valine 282 to leucine 302. Residues serine 303–glutamine 326 are Cytoplasmic-facing. A helical membrane pass occupies residues glycine 327–leucine 347. Residues proline 348–threonine 353 are Periplasmic-facing. Residues leucine 354–leucine 374 form a helical membrane-spanning segment. The Cytoplasmic segment spans residues leucine 375–alanine 399.

The protein belongs to the SEDS family. FtsW subfamily.

Its subcellular location is the cell inner membrane. It catalyses the reaction [GlcNAc-(1-&gt;4)-Mur2Ac(oyl-L-Ala-gamma-D-Glu-L-Lys-D-Ala-D-Ala)](n)-di-trans,octa-cis-undecaprenyl diphosphate + beta-D-GlcNAc-(1-&gt;4)-Mur2Ac(oyl-L-Ala-gamma-D-Glu-L-Lys-D-Ala-D-Ala)-di-trans,octa-cis-undecaprenyl diphosphate = [GlcNAc-(1-&gt;4)-Mur2Ac(oyl-L-Ala-gamma-D-Glu-L-Lys-D-Ala-D-Ala)](n+1)-di-trans,octa-cis-undecaprenyl diphosphate + di-trans,octa-cis-undecaprenyl diphosphate + H(+). Its pathway is cell wall biogenesis; peptidoglycan biosynthesis. Functionally, peptidoglycan polymerase that is essential for cell division. This chain is Probable peptidoglycan glycosyltransferase FtsW, found in Allochromatium vinosum (strain ATCC 17899 / DSM 180 / NBRC 103801 / NCIMB 10441 / D) (Chromatium vinosum).